We begin with the raw amino-acid sequence, 120 residues long: Autophagy-related protein 8C (120 aa).

The interval 1–20 (MARSSFKLEHPLERRQAEAN) is disordered. A lipid anchor (Phosphatidylethanolamine amidated glycine) is attached at Gly117. A propeptide spans 118–120 (LFV) (removed in mature form).

Belongs to the ATG8 family. As to quaternary structure, interacts with ATG4. The C-terminal 3 residues are removed by ATG4 to expose Gly-117 at the C-terminus. The C-terminal Gly is then amidated with phosphatidylethanolamine by an activating system similar to that for ubiquitin.

It is found in the cytoplasmic vesicle. Its subcellular location is the autophagosome membrane. The protein localises to the vacuole membrane. The protein resides in the cytoplasm. It localises to the cytoskeleton. In terms of biological role, ubiquitin-like modifier involved in autophagosomes formation. May mediate the delivery of the autophagosomes to the vacuole via the microtubule cytoskeleton. This is Autophagy-related protein 8C (ATG8C) from Oryza sativa subsp. indica (Rice).